A 64-amino-acid chain; its full sequence is Small ribosomal subunit protein eS17 (64 aa).

The protein belongs to the eukaryotic ribosomal protein eS17 family.

In Methanosarcina barkeri (strain Fusaro / DSM 804), this protein is Small ribosomal subunit protein eS17.